The primary structure comprises 475 residues: Ribulose bisphosphate carboxylase large chain (475 aa).

Residues Met-1–Ser-2 constitute a propeptide that is removed on maturation. N-acetylproline is present on Pro-3. Lys-14 carries the N6,N6,N6-trimethyllysine modification. Substrate contacts are provided by Asn-123 and Thr-173. The active-site Proton acceptor is Lys-175. A substrate-binding site is contributed by Lys-177. Mg(2+) contacts are provided by Lys-201, Asp-203, and Glu-204. N6-carboxylysine is present on Lys-201. His-294 (proton acceptor) is an active-site residue. Substrate is bound by residues Arg-295, His-327, and Ser-379.

This sequence belongs to the RuBisCO large chain family. Type I subfamily. Heterohexadecamer of 8 large chains and 8 small chains; disulfide-linked. The disulfide link is formed within the large subunit homodimers. The cofactor is Mg(2+). In terms of processing, the disulfide bond which can form in the large chain dimeric partners within the hexadecamer appears to be associated with oxidative stress and protein turnover.

The protein resides in the plastid. The protein localises to the chloroplast. The enzyme catalyses 2 (2R)-3-phosphoglycerate + 2 H(+) = D-ribulose 1,5-bisphosphate + CO2 + H2O. It carries out the reaction D-ribulose 1,5-bisphosphate + O2 = 2-phosphoglycolate + (2R)-3-phosphoglycerate + 2 H(+). In terms of biological role, ruBisCO catalyzes two reactions: the carboxylation of D-ribulose 1,5-bisphosphate, the primary event in carbon dioxide fixation, as well as the oxidative fragmentation of the pentose substrate in the photorespiration process. Both reactions occur simultaneously and in competition at the same active site. The sequence is that of Ribulose bisphosphate carboxylase large chain from Cedrus deodara (Deodar cedar).